The primary structure comprises 177 residues: CASP-like protein 4D1 (177 aa).

Over 1-20 (MTAPTAPSMAAPPAPSMVSR) the chain is Cytoplasmic. The chain crosses the membrane as a helical span at residues 21–41 (MTALFLRVLTFAFLMVSLVIM). Residues 42 to 66 (TTNTGTIEIGIDEFKVRSKDFYSYR) lie on the Extracellular side of the membrane. A helical membrane pass occupies residues 67-87 (YMLAAIAFGLTYTILQIALTL). The Cytoplasmic portion of the chain corresponds to 88-107 (NHISKRNGAQTSGDGNLVFD). Residues 108 to 128 (FYGDKVVSYILATGAAAAFGA) traverse the membrane as a helical segment. Topologically, residues 129–153 (TKELKTQLAGLGGDKFFNKGYASAS) are extracellular. A helical membrane pass occupies residues 154-174 (LLLLGFVCTAILSVFSSYALP). Topologically, residues 175–177 (KKV) are cytoplasmic.

The protein belongs to the Casparian strip membrane proteins (CASP) family. Homodimer and heterodimers.

Its subcellular location is the cell membrane. This Populus trichocarpa (Western balsam poplar) protein is CASP-like protein 4D1.